Reading from the N-terminus, the 338-residue chain is Holliday junction branch migration complex subunit RuvB (338 aa).

The interval Met1–Tyr182 is large ATPase domain (RuvB-L). Residues Leu21, Arg22, Gly63, Lys66, Thr67, Thr68, Glu129–Phe131, Arg172, Tyr182, and Arg219 each bind ATP. Thr67 is a binding site for Mg(2+). A small ATPAse domain (RuvB-S) region spans residues Lys183–Gln253. The segment at Asp256 to Tyr338 is head domain (RuvB-H). 3 residues coordinate DNA: Arg292, Arg311, and Arg316.

This sequence belongs to the RuvB family. Homohexamer. Forms an RuvA(8)-RuvB(12)-Holliday junction (HJ) complex. HJ DNA is sandwiched between 2 RuvA tetramers; dsDNA enters through RuvA and exits via RuvB. An RuvB hexamer assembles on each DNA strand where it exits the tetramer. Each RuvB hexamer is contacted by two RuvA subunits (via domain III) on 2 adjacent RuvB subunits; this complex drives branch migration. In the full resolvosome a probable DNA-RuvA(4)-RuvB(12)-RuvC(2) complex forms which resolves the HJ.

The protein localises to the cytoplasm. The enzyme catalyses ATP + H2O = ADP + phosphate + H(+). Functionally, the RuvA-RuvB-RuvC complex processes Holliday junction (HJ) DNA during genetic recombination and DNA repair, while the RuvA-RuvB complex plays an important role in the rescue of blocked DNA replication forks via replication fork reversal (RFR). RuvA specifically binds to HJ cruciform DNA, conferring on it an open structure. The RuvB hexamer acts as an ATP-dependent pump, pulling dsDNA into and through the RuvAB complex. RuvB forms 2 homohexamers on either side of HJ DNA bound by 1 or 2 RuvA tetramers; 4 subunits per hexamer contact DNA at a time. Coordinated motions by a converter formed by DNA-disengaged RuvB subunits stimulates ATP hydrolysis and nucleotide exchange. Immobilization of the converter enables RuvB to convert the ATP-contained energy into a lever motion, pulling 2 nucleotides of DNA out of the RuvA tetramer per ATP hydrolyzed, thus driving DNA branch migration. The RuvB motors rotate together with the DNA substrate, which together with the progressing nucleotide cycle form the mechanistic basis for DNA recombination by continuous HJ branch migration. Branch migration allows RuvC to scan DNA until it finds its consensus sequence, where it cleaves and resolves cruciform DNA. The chain is Holliday junction branch migration complex subunit RuvB from Staphylococcus carnosus (strain TM300).